The chain runs to 384 residues: S-adenosylmethionine synthase (384 aa).

Histidine 15 is a binding site for ATP. Aspartate 17 is a binding site for Mg(2+). Position 43 (glutamate 43) interacts with K(+). L-methionine contacts are provided by glutamate 56 and glutamine 99. Positions 99–109 (QSPDINQGVDK) are flexible loop. ATP contacts are provided by residues 164 to 166 (DAK), 230 to 231 (RF), aspartate 239, 245 to 246 (RK), alanine 262, and lysine 266. An L-methionine-binding site is contributed by aspartate 239. An L-methionine-binding site is contributed by lysine 270.

This sequence belongs to the AdoMet synthase family. In terms of assembly, homotetramer; dimer of dimers. The cofactor is Mg(2+). It depends on K(+) as a cofactor.

It localises to the cytoplasm. The enzyme catalyses L-methionine + ATP + H2O = S-adenosyl-L-methionine + phosphate + diphosphate. The protein operates within amino-acid biosynthesis; S-adenosyl-L-methionine biosynthesis; S-adenosyl-L-methionine from L-methionine: step 1/1. Catalyzes the formation of S-adenosylmethionine (AdoMet) from methionine and ATP. The overall synthetic reaction is composed of two sequential steps, AdoMet formation and the subsequent tripolyphosphate hydrolysis which occurs prior to release of AdoMet from the enzyme. The sequence is that of S-adenosylmethionine synthase from Vibrio vulnificus (strain YJ016).